Consider the following 286-residue polypeptide: Pyridoxal kinase PdxY (286 aa).

Substrate contacts are provided by residues serine 9 and 44–45; that span reads TQ. Residues aspartate 111, alanine 143, glutamate 148, lysine 181, and 208–211 contribute to the ATP site; that span reads RPLV. Aspartate 223 is a substrate binding site.

The protein belongs to the pyridoxine kinase family. PdxY subfamily. As to quaternary structure, homodimer. It depends on Mg(2+) as a cofactor.

The catalysed reaction is pyridoxal + ATP = pyridoxal 5'-phosphate + ADP + H(+). The protein operates within cofactor metabolism; pyridoxal 5'-phosphate salvage; pyridoxal 5'-phosphate from pyridoxal: step 1/1. Functionally, pyridoxal kinase involved in the salvage pathway of pyridoxal 5'-phosphate (PLP). Catalyzes the phosphorylation of pyridoxal to PLP. The protein is Pyridoxal kinase PdxY of Yersinia pestis bv. Antiqua (strain Antiqua).